A 447-amino-acid polypeptide reads, in one-letter code: Exodeoxyribonuclease 7 large subunit (447 aa).

It belongs to the XseA family. In terms of assembly, heterooligomer composed of large and small subunits.

Its subcellular location is the cytoplasm. The enzyme catalyses Exonucleolytic cleavage in either 5'- to 3'- or 3'- to 5'-direction to yield nucleoside 5'-phosphates.. Bidirectionally degrades single-stranded DNA into large acid-insoluble oligonucleotides, which are then degraded further into small acid-soluble oligonucleotides. The chain is Exodeoxyribonuclease 7 large subunit from Thioalkalivibrio sulfidiphilus (strain HL-EbGR7).